The chain runs to 148 residues: Helix-loop-helix protein 14 (148 aa).

Disordered regions lie at residues 1–21, 63–83, and 112–132; these read MAKK…HQVN, DPQQ…NSNN, and GDVS…SYSP. The segment at 4–17 is basic motif; sequence KNQVARNERERKRV. The bHLH domain maps to 4–56; the sequence is KNQVARNERERKRVHQVNHGFDVLRNRLQPKNHTKKWSKADTLREAVKYIQQL. The tract at residues 18–56 is helix-loop-helix motif; sequence HQVNHGFDVLRNRLQPKNHTKKWSKADTLREAVKYIQQL. Residues 63-78 show a composition bias toward polar residues; it reads DPQQPSVSSSTPDYTM. Over residues 120–132 the composition is skewed to low complexity; that stretch reads SPTSSVSSSSYSP.

The protein localises to the nucleus. Probable transcription factor, involved in determining neuroblast cell fate, morphogenesis and aspects of terminal differentiation in both left/right symmetric and asymmetric neuronal lineages. This chain is Helix-loop-helix protein 14, found in Caenorhabditis elegans.